The primary structure comprises 114 residues: Cytochrome c2 (114 aa).

The residue at position 1 (Gln-1) is a Pyrrolidone carboxylic acid. Residues Cys-13, Cys-16, His-17, and Met-93 each contribute to the heme c site.

This sequence belongs to the cytochrome c family. Binds 1 heme c group covalently per subunit.

The protein localises to the periplasm. Cytochrome c2 is found mainly in purple, non-sulfur, photosynthetic bacteria where it functions as the electron donor to the oxidized bacteriochlorophyll in the photophosphorylation pathway. However, it may also have a role in the respiratory chain and is found in some non-photosynthetic bacteria. In Rhodopseudomonas palustris, this protein is Cytochrome c2.